The chain runs to 100 residues: Integration host factor subunit alpha (100 aa).

Positions 53–72 are disordered; the sequence is FDLRDKRQRPGRNPKTGEEI.

It belongs to the bacterial histone-like protein family. As to quaternary structure, heterodimer of an alpha and a beta chain.

Its function is as follows. This protein is one of the two subunits of integration host factor, a specific DNA-binding protein that functions in genetic recombination as well as in transcriptional and translational control. This chain is Integration host factor subunit alpha, found in Pseudomonas entomophila (strain L48).